Here is a 329-residue protein sequence, read N- to C-terminus: Malate dehydrogenase (329 aa).

Residue 12–18 (GAAGQIG) participates in NAD(+) binding. Substrate contacts are provided by Arg95 and Arg101. NAD(+) contacts are provided by residues Asn108, Gln115, and 132–134 (VGN). 2 residues coordinate substrate: Asn134 and Arg165. The active-site Proton acceptor is the His190.

It belongs to the LDH/MDH superfamily. MDH type 2 family.

The catalysed reaction is (S)-malate + NAD(+) = oxaloacetate + NADH + H(+). Functionally, catalyzes the reversible oxidation of malate to oxaloacetate. This is Malate dehydrogenase from Bordetella petrii (strain ATCC BAA-461 / DSM 12804 / CCUG 43448).